We begin with the raw amino-acid sequence, 456 residues long: Iroquois-class homeodomain protein irx-2 (456 aa).

The homeobox; TALE-type DNA-binding region spans 110–172; sequence DPAYRKNATR…NARRRLKKEN (63 aa). 3 disordered regions span residues 172–214, 246–320, and 434–456; these read NKMT…AEDE, CESG…PASK, and RPTN…QPYP. Composition is skewed to basic and acidic residues over residues 192-205 and 246-256; these read GERV…KAQD and CESGSESKEKY. A compositionally biased stretch (acidic residues) spans 257 to 269; it reads DDDEDEEEGDEED. A compositionally biased stretch (polar residues) spans 291–318; the sequence is NHQQDGSPRNSNKTSLDNGMSPSSQTPA.

The protein belongs to the TALE/IRO homeobox family. Expressed in the neural plate in overlapping patterns with other irx members, which all share an anterior border of expression. Also expressed in the placodes. Broadly expressed in the tailbud rhombencephalon (hindbrain). Outside the nervous system and at tailbud stages, expressed in the developing otic vesicle, branchial arches, prospective heart region and pronephros.

Its subcellular location is the nucleus. Functionally, acts partially redundantly with other irx members in neural patterning. Required for formation of the posterior forebrain, midbrain, hindbrain, and to a lesser extent, spinal cord. Acts early in neural plate development to induce expression of some but not all proneural genes, and specify a neural precursor state. Also up-regulates repressors that prevent neuronal differentiation. Patterns the neuroectoderm in both the anterior/posterior and dorsal/ventral axes. Probably dispensable for pronephric kidney development. The polypeptide is Iroquois-class homeodomain protein irx-2 (Xenopus tropicalis (Western clawed frog)).